Reading from the N-terminus, the 221-residue chain is Translation initiation factor 6 (221 aa).

This sequence belongs to the eIF-6 family.

Functionally, binds to the 50S ribosomal subunit and prevents its association with the 30S ribosomal subunit to form the 70S initiation complex. This Cenarchaeum symbiosum (strain A) protein is Translation initiation factor 6.